Here is a 451-residue protein sequence, read N- to C-terminus: Phosphoglucosamine mutase (451 aa).

Ser-107 serves as the catalytic Phosphoserine intermediate. Residues Ser-107, Asp-246, Asp-248, and Asp-250 each contribute to the Mg(2+) site. At Ser-107 the chain carries Phosphoserine.

It belongs to the phosphohexose mutase family. The cofactor is Mg(2+). Post-translationally, activated by phosphorylation.

The enzyme catalyses alpha-D-glucosamine 1-phosphate = D-glucosamine 6-phosphate. In terms of biological role, catalyzes the conversion of glucosamine-6-phosphate to glucosamine-1-phosphate. This chain is Phosphoglucosamine mutase, found in Azoarcus sp. (strain BH72).